Reading from the N-terminus, the 402-residue chain is Putative cystathionine beta-lyase (402 aa).

N6-(pyridoxal phosphate)lysine is present on K236.

Belongs to the class-II pyridoxal-phosphate-dependent aminotransferase family. MalY/PatB cystathionine beta-lyase subfamily. The cofactor is pyridoxal 5'-phosphate.

It catalyses the reaction L,L-cystathionine + H2O = L-homocysteine + pyruvate + NH4(+). It carries out the reaction an S-substituted L-cysteine + H2O = a thiol + pyruvate + NH4(+). It functions in the pathway amino-acid biosynthesis; L-methionine biosynthesis via de novo pathway; L-homocysteine from L-cystathionine: step 1/1. The protein is Putative cystathionine beta-lyase of Mycobacterium leprae (strain TN).